Consider the following 255-residue polypeptide: Pyrroloquinoline-quinone synthase (255 aa).

Belongs to the PqqC family.

The catalysed reaction is 6-(2-amino-2-carboxyethyl)-7,8-dioxo-1,2,3,4,7,8-hexahydroquinoline-2,4-dicarboxylate + 3 O2 = pyrroloquinoline quinone + 2 H2O2 + 2 H2O + H(+). It functions in the pathway cofactor biosynthesis; pyrroloquinoline quinone biosynthesis. Ring cyclization and eight-electron oxidation of 3a-(2-amino-2-carboxyethyl)-4,5-dioxo-4,5,6,7,8,9-hexahydroquinoline-7,9-dicarboxylic-acid to PQQ. The sequence is that of Pyrroloquinoline-quinone synthase from Cereibacter sphaeroides (strain KD131 / KCTC 12085) (Rhodobacter sphaeroides).